Reading from the N-terminus, the 135-residue chain is Putative pre-16S rRNA nuclease (135 aa).

The protein belongs to the YqgF nuclease family.

Its subcellular location is the cytoplasm. In terms of biological role, could be a nuclease involved in processing of the 5'-end of pre-16S rRNA. This chain is Putative pre-16S rRNA nuclease, found in Buchnera aphidicola subsp. Acyrthosiphon pisum (strain 5A).